A 213-amino-acid chain; its full sequence is Probable lipid phosphate phosphatase beta (213 aa).

5 helical membrane-spanning segments follow: residues 30-50 (PFLP…RFSF), 67-87 (VPFL…KLIF), 118-138 (VFFV…SMTG), 158-178 (VEVV…RILL), and 181-201 (HYVL…LFAL).

Belongs to the PA-phosphatase related phosphoesterase family.

The protein resides in the membrane. The sequence is that of Probable lipid phosphate phosphatase beta (LPPB) from Arabidopsis thaliana (Mouse-ear cress).